Reading from the N-terminus, the 494-residue chain is Truncated non-functional calcium-binding mitochondrial carrier SAL1-1 (494 aa).

One can recognise an EF-hand 1 domain in the interval 11–46 (QRDIRYACLFKELDVKGNGQVTLDNLISAFEKNDHP). Ca(2+) is bound by residues Lys65, Asp70, Asp93, Asp95, Asp97, Lys99, and Glu104. 3 consecutive EF-hand domains span residues 80–115 (NAES…LDNQ), 120–155 (NELN…RGQA), and 156–191 (SHKK…VPRK). 2 residues coordinate Ca(2+): Thr161 and Ser166. Solcar repeat units follow at residues 225 to 332 (IRGF…TKKI) and 345 to 434 (LSKF…LKKM). 5 helical membrane passes run 231 to 248 (FIAG…TAPF), 307 to 326 (GNGL…FGSF), 355 to 368 (GLAG…VYPI), 409 to 428 (RCHS…FGDF), and 458 to 475 (TSNG…CLSN). One copy of the Solcar 3; truncated repeat lies at 452-494 (SKQPGCTSNGCIQWNCRSFCCLSNQSFKNKTTSPRNICTSLCV).

This sequence belongs to the mitochondrial carrier (TC 2.A.29) family.

The protein localises to the mitochondrion inner membrane. Its function is as follows. Calcium-dependent mitochondrial solute carrier. The protein is Truncated non-functional calcium-binding mitochondrial carrier SAL1-1 (SAL1) of Saccharomyces cerevisiae (strain ATCC 204508 / S288c) (Baker's yeast).